We begin with the raw amino-acid sequence, 362 residues long: Dihydroorotate dehydrogenase (quinone) (362 aa).

FMN contacts are provided by residues A60–K64 and T84. K64 lines the substrate pocket. N109–F113 is a substrate binding site. FMN is bound by residues N137 and N168. N168 is a binding site for substrate. The active-site Nucleophile is S171. Residue N173 coordinates substrate. FMN contacts are provided by K213 and S241. Residue N242–T243 participates in substrate binding. Residues G264, G293, and Y314 to S315 each bind FMN.

This sequence belongs to the dihydroorotate dehydrogenase family. Type 2 subfamily. As to quaternary structure, monomer. It depends on FMN as a cofactor.

It is found in the cell membrane. The enzyme catalyses (S)-dihydroorotate + a quinone = orotate + a quinol. The protein operates within pyrimidine metabolism; UMP biosynthesis via de novo pathway; orotate from (S)-dihydroorotate (quinone route): step 1/1. Its function is as follows. Catalyzes the conversion of dihydroorotate to orotate with quinone as electron acceptor. This Bartonella henselae (strain ATCC 49882 / DSM 28221 / CCUG 30454 / Houston 1) (Rochalimaea henselae) protein is Dihydroorotate dehydrogenase (quinone).